Reading from the N-terminus, the 247-residue chain is Cell division protein ZapD (247 aa).

Belongs to the ZapD family. As to quaternary structure, interacts with FtsZ.

The protein resides in the cytoplasm. Its function is as follows. Cell division factor that enhances FtsZ-ring assembly. Directly interacts with FtsZ and promotes bundling of FtsZ protofilaments, with a reduction in FtsZ GTPase activity. The protein is Cell division protein ZapD of Klebsiella pneumoniae (strain 342).